Here is a 78-residue protein sequence, read N- to C-terminus: Short neurotoxin SNTX11 (78 aa).

An N-terminal signal peptide occupies residues 1-21 (MKTLLLTFLVVTIVCLDLGYT). 4 disulfides stabilise this stretch: Cys24–Cys40, Cys33–Cys58, Cys62–Cys70, and Cys71–Cys76.

It belongs to the three-finger toxin family. Short-chain subfamily. In terms of tissue distribution, expressed by the venom gland.

The protein resides in the secreted. Functionally, this three-finger toxin binds and inhibits the nicotinic acetylcholine receptor (nAChR). The chain is Short neurotoxin SNTX11 from Ophiophagus hannah (King cobra).